A 184-amino-acid polypeptide reads, in one-letter code: Peptide deformylase (184 aa).

Positions 99 and 141 each coordinate Fe cation. The active site involves Glu142. His145 is a Fe cation binding site.

Belongs to the polypeptide deformylase family. Fe(2+) is required as a cofactor.

The enzyme catalyses N-terminal N-formyl-L-methionyl-[peptide] + H2O = N-terminal L-methionyl-[peptide] + formate. Its function is as follows. Removes the formyl group from the N-terminal Met of newly synthesized proteins. Requires at least a dipeptide for an efficient rate of reaction. N-terminal L-methionine is a prerequisite for activity but the enzyme has broad specificity at other positions. The sequence is that of Peptide deformylase from Chlamydia abortus (strain DSM 27085 / S26/3) (Chlamydophila abortus).